We begin with the raw amino-acid sequence, 236 residues long: 2,3,4,5-tetrahydropyridine-2,6-dicarboxylate N-acetyltransferase (236 aa).

Belongs to the transferase hexapeptide repeat family. DapH subfamily.

It carries out the reaction (S)-2,3,4,5-tetrahydrodipicolinate + acetyl-CoA + H2O = L-2-acetamido-6-oxoheptanedioate + CoA. The protein operates within amino-acid biosynthesis; L-lysine biosynthesis via DAP pathway; LL-2,6-diaminopimelate from (S)-tetrahydrodipicolinate (acetylase route): step 1/3. In terms of biological role, catalyzes the transfer of an acetyl group from acetyl-CoA to tetrahydrodipicolinate. This is 2,3,4,5-tetrahydropyridine-2,6-dicarboxylate N-acetyltransferase from Clostridium botulinum (strain 657 / Type Ba4).